We begin with the raw amino-acid sequence, 521 residues long: Anaerobic nitric oxide reductase flavorubredoxin (521 aa).

The segment at 30–210 (HKGTSYNSYL…PFSPLVTAKI (181 aa)) is zinc metallo-hydrolase. Fe cation is bound by residues His79, Glu81, Asp83, His147, Asp166, and His227. The Flavodoxin-like domain maps to 254-393 (ITLFYDSMSN…LCREHGRQLA (140 aa)). FMN contacts are provided by residues 260–264 (SMSNN) and 342–369 (AFGS…DISI). The region spanning 464-515 (DQPMLCTVCQWIYDPALGEPDQLVAPGTPWARVPDSFLCPGCGIGKEVFEPC) is the Rubredoxin-like domain. Cys469, Cys472, Cys502, and Cys505 together coordinate Fe cation.

In the N-terminal section; belongs to the zinc metallo-hydrolase group 3 family. In terms of assembly, homotetramer. Fe cation is required as a cofactor. FMN serves as cofactor.

It localises to the cytoplasm. The protein operates within nitrogen metabolism; nitric oxide reduction. In terms of biological role, anaerobic nitric oxide reductase; uses NADH to detoxify nitric oxide (NO), protecting several 4Fe-4S NO-sensitive enzymes. Has at least 2 reductase partners, only one of which (NorW, flavorubredoxin reductase) has been identified. NO probably binds to the di-iron center; electrons enter from the NorW at rubredoxin and are transferred sequentially to the FMN center and the di-iron center. Also able to function as an aerobic oxygen reductase. This Aeromonas salmonicida (strain A449) protein is Anaerobic nitric oxide reductase flavorubredoxin.